The primary structure comprises 248 residues: mRNA-decapping protein OPG122 (248 aa).

In terms of domain architecture, Nudix hydrolase spans 45-227 (HKRVSVSAIL…IAKYALDTAK (183 aa)). A Nudix box motif is present at residues 125 to 147 (GGILKRGENVPECLSREIKEEVN). Glu-132 contacts Mg(2+). The Nucleophile role is filled by Glu-141. Glu-145 serves as a coordination point for Mn(2+). A Mg(2+)-binding site is contributed by Asp-167.

It belongs to the Nudix hydrolase family. The cofactor is Mg(2+). Requires Mn(2+) as cofactor.

Its subcellular location is the host mitochondrion. Functionally, decapping enzyme that remove the protective 5'-cap from both host and viral mRNAs to commit transcripts for decay by the cellular exonuclease XRN1. Preferentially targets spliced mRNAs and since all viral genes are intronless, it preferentially targets host over viral transcripts. Acceleration of the turnover of cellular transcripts promotes the shutoff of host protein synthesis and therefore diminish the magnitude of antiviral response. The polypeptide is mRNA-decapping protein OPG122 (OPG122) (Variola virus (isolate Human/India/Ind3/1967) (VARV)).